The following is a 221-amino-acid chain: Thymine/uracil-DNA glycosylase (221 aa).

The region spanning 105–133 (DYGGRVPRNRKAILDLPGVGKYTCAAVMC) is the HhH domain. [4Fe-4S] cluster-binding residues include Cys197, Cys204, Cys207, and Cys213.

Belongs to the Nth/MutY family. [4Fe-4S] cluster serves as cofactor.

It carries out the reaction Hydrolyzes mismatched double-stranded DNA and polynucleotides, releasing free thymine.. DNA glycosylase that excises thymine from T/G mismatches and uracil from U/G mismatches. Acts as a repair enzyme able to counteract the mutagenic effect of spontaneous hydrolytic deamination of DNA 5-methylcytosine (5-meC) residues that leads to the formation of T/G mismatches. May also repair U/G mismatches arising from hydrolytic deamination of DNA cytosine residues. G/G, A/G, T/C and U/C are minor substrates. This chain is Thymine/uracil-DNA glycosylase, found in Methanothermobacter thermautotrophicus (Methanobacterium thermoformicicum).